The sequence spans 250 residues: 2,3-bisphosphoglycerate-dependent phosphoglycerate mutase (250 aa).

Substrate-binding positions include 10-17, 23-24, Arg-62, 89-92, Lys-100, 116-117, and 185-186; these read RHGESQWN, TG, ERHY, RR, and GN. His-11 (tele-phosphohistidine intermediate) is an active-site residue. Catalysis depends on Glu-89, which acts as the Proton donor/acceptor.

This sequence belongs to the phosphoglycerate mutase family. BPG-dependent PGAM subfamily. In terms of assembly, homodimer.

It carries out the reaction (2R)-2-phosphoglycerate = (2R)-3-phosphoglycerate. The protein operates within carbohydrate degradation; glycolysis; pyruvate from D-glyceraldehyde 3-phosphate: step 3/5. Its function is as follows. Catalyzes the interconversion of 2-phosphoglycerate and 3-phosphoglycerate. This Klebsiella pneumoniae (strain 342) protein is 2,3-bisphosphoglycerate-dependent phosphoglycerate mutase.